Reading from the N-terminus, the 341-residue chain is D-aspartate oxidase (341 aa).

FAD-binding residues include Asp-36, Lys-37, Thr-43, Ser-44, Met-50, Gly-307, and Ile-311. The short motif at 339 to 341 (SKL) is the Microbody targeting signal element.

The protein belongs to the DAMOX/DASOX family. As to quaternary structure, homotetramer. Interacts with PEX5; the interaction is direct and required for localization of DDO to the peroxisome. The cofactor is FAD. Expressed in epithelial cells of the renal proximal tubules (not detected in the glomeruli or renal distal tubules), liver, right atrium of heart, lung, chief cells of the gastric mucosa, choroid plexus, pia mater, brain stem, midbrain, pons, medulla oblongata, hypothalamus, hippocampus, cerebral cortex, cerebellum, ependyma, olfactory bulb and the pituitary, pineal, thyroid and adrenal glands (at protein level).

Its subcellular location is the peroxisome matrix. The protein localises to the cytoplasm. It is found in the cytosol. The catalysed reaction is D-aspartate + O2 + H2O = oxaloacetate + H2O2 + NH4(+). It catalyses the reaction D-glutamate + O2 + H2O = H2O2 + 2-oxoglutarate + NH4(+). Functionally, selectively catalyzes the oxidative deamination of acidic amino acids. Suppresses the level of D-aspartate in the brain, an amino acid that can act as an agonist for glutamate receptors. Protects the organism from the toxicity of D-amino acids. May also function in the intestine. The polypeptide is D-aspartate oxidase (DDO) (Sus scrofa (Pig)).